Reading from the N-terminus, the 86-residue chain is Large ribosomal subunit protein bL31B (86 aa).

It belongs to the bacterial ribosomal protein bL31 family. Type B subfamily. As to quaternary structure, part of the 50S ribosomal subunit.

The protein is Large ribosomal subunit protein bL31B of Yersinia pseudotuberculosis serotype O:1b (strain IP 31758).